The chain runs to 238 residues: Large ribosomal subunit protein uL1 (238 aa).

It belongs to the universal ribosomal protein uL1 family. As to quaternary structure, part of the 50S ribosomal subunit.

In terms of biological role, binds directly to 23S rRNA. The L1 stalk is quite mobile in the ribosome, and is involved in E site tRNA release. Its function is as follows. Protein L1 is also a translational repressor protein, it controls the translation of the L11 operon by binding to its mRNA. The polypeptide is Large ribosomal subunit protein uL1 (Trichormus variabilis (strain ATCC 29413 / PCC 7937) (Anabaena variabilis)).